A 400-amino-acid polypeptide reads, in one-letter code: Tryptophan synthase beta chain (400 aa).

Residue K92 is modified to N6-(pyridoxal phosphate)lysine.

It belongs to the TrpB family. As to quaternary structure, tetramer of two alpha and two beta chains. Pyridoxal 5'-phosphate is required as a cofactor.

It carries out the reaction (1S,2R)-1-C-(indol-3-yl)glycerol 3-phosphate + L-serine = D-glyceraldehyde 3-phosphate + L-tryptophan + H2O. It functions in the pathway amino-acid biosynthesis; L-tryptophan biosynthesis; L-tryptophan from chorismate: step 5/5. The beta subunit is responsible for the synthesis of L-tryptophan from indole and L-serine. The polypeptide is Tryptophan synthase beta chain (Chromobacterium violaceum (strain ATCC 12472 / DSM 30191 / JCM 1249 / CCUG 213 / NBRC 12614 / NCIMB 9131 / NCTC 9757 / MK)).